The chain runs to 95 residues: Large ribosomal subunit protein bL21 (95 aa).

The protein belongs to the bacterial ribosomal protein bL21 family. Part of the 50S ribosomal subunit. Contacts protein L20.

Its function is as follows. This protein binds to 23S rRNA in the presence of protein L20. This chain is Large ribosomal subunit protein bL21, found in Rubrobacter xylanophilus (strain DSM 9941 / JCM 11954 / NBRC 16129 / PRD-1).